A 239-amino-acid chain; its full sequence is Cysteine-rich venom protein kaouthin-1 (239 aa).

The N-terminal stretch at 1-18 is a signal peptide; it reads MIAFSLLCLAAVLRQSFG. The 129-residue stretch at 37-165 folds into the SCP domain; the sequence is VDLHNSLRRR…AWSYFYVCQY (129 aa). Cystine bridges form between C74-C152, C91-C166, C147-C163, C185-C192, C188-C197, C201-C234, C210-C228, and C219-C232. A ShKT domain is found at 201–234; sequence CTIYNKLTNCDSLLKQGSCQDDWIKSNCPASCFC.

It belongs to the CRISP family. As to expression, expressed by the venom gland.

The protein resides in the secreted. Functionally, inhibits calcium-activated potassium channels (KCa), voltage-gated potassium channel (Kv), and the calcium release channel/ryanodine receptor (RyR). The polypeptide is Cysteine-rich venom protein kaouthin-1 (Naja kaouthia (Monocled cobra)).